A 446-amino-acid polypeptide reads, in one-letter code: MTGVAVPHRAELARQLIDARNRTLRLVDFDDAELRRQYDPLMSPLVWDLAHIGQQEELWLLRGGDPRRPGLLEPAVEQLYDAFVHPRASRVHLPLLSPAQARRFCATVRSAVLDALDRLPEDADTFAFGMVVSHEHQHDETMLQALNLRSGEPLLGSGTALPPGRPGVAGTSVLVPGGPFVLGVDLADEPYALDNERPAHVVDVPAFRIGRVPVTNAEWRAFIDDGGYRQRRWWSDAGWAYRCEAGLTAPQFWNPDGTRTRFGHVEDIPPDEPVQHVTYFEAEAYAAWAGARLPTEIEWEKACAWDPATGRRRRYPWGDAAPTAALANLGGDALRPAPVGAYPAGASACGAEQMLGDVWEWTSSPLRPWPGFTPMIYQRYSQPFFEGAGSGDYRVLRGGSWAVAADILRPSFRNWDHPIRRQIFAGVRLAWDVDRQTARPGPVGGC.

Residue histidine 51 participates in Fe cation binding. Position 87–90 (87–90) interacts with gamma-L-glutamyl-L-cysteine; sequence RASR. Fe cation is bound by residues histidine 134 and histidine 138. The gamma-L-glutamyl-L-cysteine site is built by aspartate 416 and arginine 420.

It belongs to the EgtB family. Monomer. Requires Fe(2+) as cofactor.

The enzyme catalyses gamma-L-glutamyl-L-cysteine + hercynine + O2 = gamma-L-glutamyl-hercynylcysteine S-oxide + H2O. It participates in amino-acid biosynthesis; ergothioneine biosynthesis. In terms of biological role, catalyzes the oxidative sulfurization of hercynine (N-alpha,N-alpha,N-alpha-trimethyl-L-histidine) into hercynyl-gamma-L-glutamyl-L-cysteine sulfoxide, a step in the biosynthesis pathway of ergothioneine. This Mycolicibacterium thermoresistibile (strain ATCC 19527 / DSM 44167 / CIP 105390 / JCM 6362 / NCTC 10409 / 316) (Mycobacterium thermoresistibile) protein is Hercynine oxygenase.